The chain runs to 480 residues: Protein nucleotidyltransferase YdiU (480 aa).

Positions 86, 88, 89, 109, 121, 122, 172, and 179 each coordinate ATP. Aspartate 248 serves as the catalytic Proton acceptor. 2 residues coordinate Mg(2+): asparagine 249 and aspartate 258. Aspartate 258 serves as a coordination point for ATP.

This sequence belongs to the SELO family. Requires Mg(2+) as cofactor. The cofactor is Mn(2+).

It catalyses the reaction L-seryl-[protein] + ATP = 3-O-(5'-adenylyl)-L-seryl-[protein] + diphosphate. The enzyme catalyses L-threonyl-[protein] + ATP = 3-O-(5'-adenylyl)-L-threonyl-[protein] + diphosphate. The catalysed reaction is L-tyrosyl-[protein] + ATP = O-(5'-adenylyl)-L-tyrosyl-[protein] + diphosphate. It carries out the reaction L-histidyl-[protein] + UTP = N(tele)-(5'-uridylyl)-L-histidyl-[protein] + diphosphate. It catalyses the reaction L-seryl-[protein] + UTP = O-(5'-uridylyl)-L-seryl-[protein] + diphosphate. The enzyme catalyses L-tyrosyl-[protein] + UTP = O-(5'-uridylyl)-L-tyrosyl-[protein] + diphosphate. Its function is as follows. Nucleotidyltransferase involved in the post-translational modification of proteins. It can catalyze the addition of adenosine monophosphate (AMP) or uridine monophosphate (UMP) to a protein, resulting in modifications known as AMPylation and UMPylation. This Salmonella heidelberg (strain SL476) protein is Protein nucleotidyltransferase YdiU.